The primary structure comprises 86 residues: Large ribosomal subunit protein bL31 (86 aa).

The disordered stretch occupies residues 66-86 (GMGSADSATSQETKEAKESDK). Residues 77-86 (ETKEAKESDK) are compositionally biased toward basic and acidic residues.

This sequence belongs to the bacterial ribosomal protein bL31 family. Type A subfamily. Part of the 50S ribosomal subunit.

Functionally, binds the 23S rRNA. In Prochlorococcus marinus (strain MIT 9515), this protein is Large ribosomal subunit protein bL31.